Here is a 566-residue protein sequence, read N- to C-terminus: Alpha-N-acetylgalactosaminide alpha-2,6-sialyltransferase 1 (566 aa).

At 1–16 (MGFLIRRLPKDSRIFR) the chain is on the cytoplasmic side. Residues 17 to 37 (WLLILTVFSFIITSFSALFGM) form a helical; Signal-anchor for type II membrane protein membrane-spanning segment. Residues 38–566 (EKSIFRQLKI…ENIMKLYQRS (529 aa)) lie on the Lumenal side of the membrane. Residues asparagine 66 and asparagine 132 are each glycosylated (N-linked (GlcNAc...) asparagine). Positions 138–161 (ASVVERTKEKTTARPVPGVGEADG) are disordered. Residue asparagine 192 is glycosylated (N-linked (GlcNAc...) asparagine). Copy 1 of the repeat occupies 247 to 254 (SSSPVSTC). Positions 247–337 (SSSPVSTCSE…ANSSSNVSTC (91 aa)) are 2 X 8 AA repeats of S-S-S-X-V-S-T-C. Cystine bridges form between cysteine 254/cysteine 337 and cysteine 340/cysteine 508. Asparagine 275, asparagine 286, asparagine 306, asparagine 329, and asparagine 333 each carry an N-linked (GlcNAc...) asparagine glycan. The stretch at 330–337 (SSSNVSTC) is repeat 2.

Belongs to the glycosyltransferase 29 family. As to expression, heart, kidney, testes, brain, liver and lung.

The protein localises to the golgi apparatus membrane. It carries out the reaction a beta-D-galactosyl-(1-&gt;3)-N-acetyl-alpha-D-galactosaminyl derivative + CMP-N-acetyl-beta-neuraminate = a beta-D-galactosyl-(1-&gt;3)-[N-acetyl-alpha-neuraminyl-(2-&gt;6)]-N-acetyl-alpha-D-galactosaminyl derivative + CMP + H(+). It catalyses the reaction a 3-O-[N-acetyl-alpha-D-galactosaminyl]-L-seryl-[protein] + CMP-N-acetyl-beta-neuraminate = a 3-O-[N-acetyl-alpha-neuraminosyl-(2-&gt;6)-N-acetyl-alpha-D-galactosaminyl]-L-seryl-[protein] + CMP + H(+). The catalysed reaction is a 3-O-[N-acetyl-alpha-D-galactosaminyl]-L-threonyl-[protein] + CMP-N-acetyl-beta-neuraminate = a 3-O-[N-acetyl-alpha-neuraminosyl-(2-&gt;6)-N-acetyl-alpha-D-galactosaminyl]-L-threonyl-[protein] + CMP + H(+). The enzyme catalyses a 3-O-[beta-D-galactosyl-(1-&gt;3)-N-acetyl-alpha-D-galactosaminyl]-L-seryl-[protein] + CMP-N-acetyl-beta-neuraminate = a 3-O-{beta-D-galactosyl-(1-&gt;3)-[N-acetyl-alpha-neuraminosyl-(2-&gt;6)]-N-acetyl-alpha-D-galactosaminyl}-L-seryl-[protein] + CMP + H(+). It carries out the reaction a 3-O-[beta-D-galactosyl-(1-&gt;3)-N-acetyl-alpha-D-galactosaminyl]-L-threonyl-[protein] + CMP-N-acetyl-beta-neuraminate = a 3-O-{beta-D-galactosyl-(1-&gt;3)-[N-acetyl-alpha-neuraminosyl-(2-&gt;6)]-N-acetyl-alpha-D-galactosaminyl}-L-threonyl-[protein] + CMP + H(+). It catalyses the reaction a 3-O-[N-acetyl-alpha-neuraminyl-(2-&gt;3)-beta-D-galactosyl-(1-&gt;3)-N-acetyl-alpha-D-galactosaminyl]-L-threonyl-[protein] + CMP-N-acetyl-beta-neuraminate = a 3-O-{alpha-Neu5Ac-(2-&gt;3)-beta-D-Gal-(1-&gt;3)-[alpha-Neu5Ac-(2-&gt;6)]-alpha-D-GalNAc}-L-threonyl-[protein] + CMP + H(+). Its pathway is protein modification; protein glycosylation. Protein sialyltransferase specifically expressed in goblet cells that plays a key role in intestinal host-commensal homeostasis. Conjugates sialic acid with an alpha-2-6 linkage to N-acetylgalactosamine (GalNAc) glycan chains linked to serine or threonine in glycoproteins. Generates sialylated T and Tn antigens.. This chain is Alpha-N-acetylgalactosaminide alpha-2,6-sialyltransferase 1 (ST6GALNAC1), found in Gallus gallus (Chicken).